Consider the following 72-residue polypeptide: MAKDDVIEVEGTVLETLPNAMFKVELENGHVVLAHVSGKIRMNFIRILPGDKVTVELSPYDLNRGRITYRFK.

The S1-like domain maps to Met1–Lys72. Tyr60 bears the Phosphotyrosine mark.

Belongs to the IF-1 family. As to quaternary structure, component of the 30S ribosomal translation pre-initiation complex which assembles on the 30S ribosome in the order IF-2 and IF-3, IF-1 and N-formylmethionyl-tRNA(fMet); mRNA recruitment can occur at any time during PIC assembly.

Its subcellular location is the cytoplasm. One of the essential components for the initiation of protein synthesis. Stabilizes the binding of IF-2 and IF-3 on the 30S subunit to which N-formylmethionyl-tRNA(fMet) subsequently binds. Helps modulate mRNA selection, yielding the 30S pre-initiation complex (PIC). Upon addition of the 50S ribosomal subunit IF-1, IF-2 and IF-3 are released leaving the mature 70S translation initiation complex. The sequence is that of Translation initiation factor IF-1 from Bacillus thuringiensis (strain Al Hakam).